Consider the following 676-residue polypeptide: MEGLSLLQLPRDKFRKSSFFVWVIILFQKAFSMPLGVVTNSTLEVTEIDQLVCKDHLASTDQLKSVGLNLEGSGVSTDIPSATKRWGFRSGVPPQVVSYEAGEWAENCYNLEIKKPDGSECLPPPPDGVRGFPRCRYVHKAQGTGPCPGDYAFHKDGAFFLYDRLASTVIYRGVNFAEGVIAFLILAKPKETFLQSPPIREAANYTENTSSYYATSYLEYEIENFGAQHSTTLFKINNNTFVLLDRPHTPQFLFQLNDTIQLHQQLSNTTGKLIWTLDANINADIGEWAFWENKKNLSEQLRGEELSFETLSLNETEDDDATSSRTTKGRISDRATRKYSDLVPKDSPGMVSLHVPEGETTLPSQNSTEGRRVDVNTQETITETTATIIGTNGNNMQISTIGTGLSSSQILSSSPTMAPSPETQTSTTYTPKLPVMTTEEPTTPPRNSPGSTTEAPTLTTPENITTAVKTVWAQESTSNGLITSTVTGILGSLGLRKRSRRQVNTRATGKCNPNLHYWTAQEQHNAAGIAWIPYFGPGAEGIYTEGLMHNQNALVCGLRQLANETTQALQLFLRATTELRTYTILNRKAIDFLLRRWGGTCRILGPDCCIEPHDWTKNITDKINQIIHDFIDNPLPNQDNDDNWWTGWRQWIPAGIGITGIIIAIIALLCVCKLLC.

A signal peptide spans 1–32 (MEGLSLLQLPRDKFRKSSFFVWVIILFQKAFS). The Extracellular portion of the chain corresponds to 33-650 (MPLGVVTNST…DDNWWTGWRQ (618 aa)). N-linked (GlcNAc...) asparagine; by host glycosylation is present at Asn-40. Disulfide bonds link Cys-53/Cys-609, Cys-108/Cys-135, Cys-121/Cys-147, Cys-511/Cys-556, and Cys-601/Cys-608. A receptor-binding region spans residues 54–201 (KDHLASTDQL…TFLQSPPIRE (148 aa)). 7 N-linked (GlcNAc...) asparagine; by host glycosylation sites follow: Asn-204, Asn-208, Asn-238, Asn-257, Asn-268, Asn-296, and Asn-314. The tract at residues 305 to 485 (ELSFETLSLN…STSNGLITST (181 aa)) is mucin-like region. A disordered region spans residues 312-351 (SLNETEDDDATSSRTTKGRISDRATRKYSDLVPKDSPGMV). Residues 330–344 (RISDRATRKYSDLVP) show a composition bias toward basic and acidic residues. An N-linked (GlcNAc...) asparagine; by host glycan is attached at Asn-366. The disordered stretch occupies residues 406-458 (SSSQILSSSPTMAPSPETQTSTTYTPKLPVMTTEEPTTPPRNSPGSTTEAPTL). 2 stretches are compositionally biased toward polar residues: residues 415-430 (PTMA…TTYT) and 448-458 (SPGSTTEAPTL). An N-linked (GlcNAc...) asparagine; by host glycan is attached at Asn-463. The interval 524 to 539 (HNAAGIAWIPYFGPGA) is fusion peptide. A coiled-coil region spans residues 554–595 (LVCGLRQLANETTQALQLFLRATTELRTYTILNRKAIDFLLR). An N-linked (GlcNAc...) asparagine; by host glycan is attached at Asn-563. Residues 615-634 (WTKNITDKINQIIHDFIDNP) adopt a coiled-coil conformation. An N-linked (GlcNAc...) asparagine; by host glycan is attached at Asn-618. The chain crosses the membrane as a helical span at residues 651–671 (WIPAGIGITGIIIAIIALLCV). 2 S-palmitoyl cysteine; by host lipidation sites follow: Cys-670 and Cys-672. At 672 to 676 (CKLLC) the chain is on the cytoplasmic side.

It belongs to the filoviruses glycoprotein family. As to quaternary structure, homotrimer; each monomer consists of a GP1 and a GP2 subunit linked by disulfide bonds. The resulting peplomers (GP1,2) protrude from the virus surface as spikes. Interacts with host integrin alpha-V/ITGAV. Interacts with host CLEC10A. Binds also to host CD209 and CLEC4M/DC-SIGN(R). Interacts with host FOLR1. Interacts with BST2; this interaction inhibits the antiviral effect of BST2 and this allows viral release from infected cells. Interacts with host FCN1; this interaction enhances viral entry. Interacts with host TLR4; this interaction induces cell death in T-lymphocytes or proinflammatory cytokines and SOCS1 production in monocytes. In terms of assembly, interacts with host entry receptor NPC1. GP1 and GP2delta are part of GP1,2delta soluble complexes released by ectodomain shedding. The signal peptide region modulates GP's high mannose glycosylation, thereby determining the efficiency of the interactions with DC-SIGN(R). Post-translationally, N-glycosylated. In terms of processing, O-glycosylated in the mucin-like region. Palmitoylation of GP2 is not required for its function. Post-translationally, specific enzymatic cleavages in vivo yield mature proteins. The precursor is processed into GP1 and GP2 by host cell furin in the trans Golgi, and maybe by other host proteases, to yield the mature GP1 and GP2 proteins. The cleavage site corresponds to the furin optimal cleavage sequence [KR]-X-[KR]-R. This cleavage does not seem to be required for function. After the internalization of the virus into cell endosomes, GP1 C-terminus is removed by the endosomal proteases cathepsin B, cathepsin L, or both, leaving a 19-kDa N-terminal fragment which is further digested by cathepsin B. Proteolytic processing of GP1,2 by host ADAM17 can remove the transmembrane anchor of GP2 and leads to shedding of complexes consisting in GP1 and truncated GP2 (GP1,2delta).

The protein resides in the virion membrane. Its subcellular location is the host cell membrane. The protein localises to the secreted. Trimeric GP1,2 complexes form the virion surface spikes and mediate the viral entry processes, with GP1 acting as the receptor-binding subunit and GP2 as the membrane fusion subunit. At later times of infection, down-regulates the expression of various host cell surface molecules that are essential for immune surveillance and cell adhesion. Down-modulates several integrins including ITGA1, ITGA2, ITGA3, ITGA4, ITGA5, ITGA6, ITGAV and ITGB1. This decrease in cell adhesion molecules may lead to cell detachment, contributing to the disruption of blood vessel integrity and hemorrhages developed during infection (cytotoxicity). Interacts with host TLR4 and thereby stimulates the differentiation and activation of monocytes leading to bystander death of T-lymphocytes. Down-regulates as well the function of host natural killer cells. Counteracts the antiviral effect of host BST2/tetherin that restricts release of progeny virions from infected cells. However, cooperates with VP40 and host BST2 to activate canonical NF-kappa-B pathway in a manner dependent on neddylation. Functionally, functions as a decoy for anti-GP1,2 antibodies thereby contributing to viral immune evasion. Interacts and activates host macrophages and dendritic cells inducing up-regulation of cytokine transcription. This effect is mediated throught activation of host TLR4. Its function is as follows. Responsible for binding to the receptor(s) on target cells. Interacts with CD209/DC-SIGN and CLEC4M/DC-SIGNR which act as cofactors for virus entry into dendritic cells (DCs) and endothelial cells. Binding to the macrophage specific lectin CLEC10A also seems to enhance virus infectivity. Interaction with FOLR1/folate receptor alpha may be a cofactor for virus entry in some cell types, although results are contradictory. Members of the Tyro3 receptor tyrosine kinase family also seem to be cell entry factors in filovirus infection. Once attached, the virions are internalized through clathrin-dependent endocytosis and/or macropinocytosis. After internalization of the virus into the endosomes of the host cell, proteolysis of GP1 by two cysteine proteases, CTSB/cathepsin B and CTSL/cathepsin L removes the glycan cap and allows GP1 binding to the host entry receptor NPC1. NPC1-binding, Ca(2+) and acidic pH induce a conformational change of GP2, which unmasks its fusion peptide and permit membranes fusion. In terms of biological role, acts as a class I viral fusion protein. Under the current model, the protein has at least 3 conformational states: pre-fusion native state, pre-hairpin intermediate state, and post-fusion hairpin state. During viral and target cell membrane fusion, the coiled coil regions (heptad repeats) assume a trimer-of-hairpins structure, positioning the fusion peptide in close proximity to the C-terminal region of the ectodomain. The formation of this structure appears to drive apposition and subsequent fusion of viral and target cell membranes. Responsible for penetration of the virus into the cell cytoplasm by mediating the fusion of the membrane of the endocytosed virus particle with the endosomal membrane. Low pH in endosomes induces an irreversible conformational change in GP2, releasing the fusion hydrophobic peptide. The chain is Envelope glycoprotein (GP) from Sudan ebolavirus (strain Maleo-79) (SEBOV).